A 437-amino-acid polypeptide reads, in one-letter code: C-terminal-binding protein 2 (437 aa).

NAD(+)-binding positions include S103, 183 to 188 (IGLGRI), D207, 240 to 246 (CNLNEHN), 267 to 269 (TAR), and D293. Residue R269 is part of the active site. E298 is an active-site residue. The active-site Proton donor is the H318. 318 to 321 (HTAW) contacts NAD(+). The disordered stretch occupies residues 410–437 (PLIPSVSHTPSPGQTTKPDPDREIPTDQ). Positions 415-426 (VSHTPSPGQTTK) are enriched in polar residues. Residues 427–437 (PDPDREIPTDQ) show a composition bias toward basic and acidic residues.

The protein belongs to the D-isomer specific 2-hydroxyacid dehydrogenase family. As to quaternary structure, interacts with the C-terminus of tcf7l1-a via the consensus motifs P-X-[DNS]-L-[STVA].

Its subcellular location is the nucleus. Its function is as follows. Corepressor targeting diverse transcription regulators. The sequence is that of C-terminal-binding protein 2 (ctbp2) from Xenopus laevis (African clawed frog).